An 87-amino-acid polypeptide reads, in one-letter code: DNA polymerase epsilon subunit C (87 aa).

DNA polymerase epsilon is a heterotetramer consisting of cdc20/Pol2, dpb2, dpb3, and dpb4. Also forms a heterodimer consisting dpb3 and dpb4. Interacts directly with cdc20/pol2 and dpb4.

Its subcellular location is the nucleus. Its function is as follows. As accessory component of the DNA polymerase epsilon (DNA polymerase II) participates in chromosomal DNA replication. It is required during synthesis of the leading and lagging DNA strands at the replication fork and binds at/or near replication origins and moves along DNA with the replication fork. It has 3'-5' proofreading exonuclease activity that correct errors arising during DNA replication. It is also involved in DNA synthesis during DNA repair. The dpb3-dpb4 dimer associates with histone deacetylases, chromatin remodelers, and histones and plays a crucial role in the inheritance of histone hypoacetylation and H3K9 methylation in heterochromatin. The dpb3-dpb4 dimer is also required for the recruitment of sir2 to heterochromatin. In Schizosaccharomyces pombe (strain 972 / ATCC 24843) (Fission yeast), this protein is DNA polymerase epsilon subunit C.